The following is a 67-amino-acid chain: DNA-directed RNA polymerase subunit omega (67 aa).

It belongs to the RNA polymerase subunit omega family. The RNAP catalytic core consists of 2 alpha, 1 beta, 1 beta' and 1 omega subunit. When a sigma factor is associated with the core the holoenzyme is formed, which can initiate transcription.

It catalyses the reaction RNA(n) + a ribonucleoside 5'-triphosphate = RNA(n+1) + diphosphate. Promotes RNA polymerase assembly. Latches the N- and C-terminal regions of the beta' subunit thereby facilitating its interaction with the beta and alpha subunits. The polypeptide is DNA-directed RNA polymerase subunit omega (Burkholderia ambifaria (strain ATCC BAA-244 / DSM 16087 / CCUG 44356 / LMG 19182 / AMMD) (Burkholderia cepacia (strain AMMD))).